The chain runs to 354 residues: Serine/threonine-protein phosphatase 2A activator 2 (354 aa).

It belongs to the PTPA-type PPIase family.

It localises to the cytoplasm. The enzyme catalyses [protein]-peptidylproline (omega=180) = [protein]-peptidylproline (omega=0). PPIases accelerate the folding of proteins. It catalyzes the cis-trans isomerization of proline imidic peptide bonds in oligopeptides. Acts as a regulatory subunit for PP2A-like phosphatases modulating their activity or substrate specificity, probably by inducing a conformational change in the catalytic subunit, a direct target of the PPIase. Can reactivate inactive phosphatase PP2A-phosphatase methylesterase complexes (PP2Ai) in presence of ATP and Mg(2+) by dissociating the inactive form from the complex. The sequence is that of Serine/threonine-protein phosphatase 2A activator 2 (RRD2) from Yarrowia lipolytica (strain CLIB 122 / E 150) (Yeast).